The following is a 156-amino-acid chain: MKLEVCSYSGFKVYPGHGKRVIRVDGRSFYFINKKSERSHYLKRNPREISWTVLYRRKYKKGMSEEQTKNELSVLTKTARGIAGASLAEIMAKRNQKPEVRKAMRDQAIRAAKEKQKQKELEKKAKKVEKKKPTLAPKQKAAKITQKPAPRVGGKR.

Residues Arg-110 to Lys-123 are compositionally biased toward basic and acidic residues. The segment at Arg-110–Arg-156 is disordered.

The protein belongs to the eukaryotic ribosomal protein eL24 family.

This Schistosoma japonicum (Blood fluke) protein is Large ribosomal subunit protein eL24 (RPL24).